The following is a 478-amino-acid chain: ATP-dependent RNA helicase DDX19A (478 aa).

An N-acetylalanine modification is found at alanine 2. The tract at residues 2 to 299 (ATDSWALAVD…DPNVIKLKRE (298 aa)) is N-terminal lobe. Residue lysine 26 forms a Glycyl lysine isopeptide (Lys-Gly) (interchain with G-Cter in SUMO1); alternate linkage. A Glycyl lysine isopeptide (Lys-Gly) (interchain with G-Cter in SUMO2); alternate cross-link involves residue lysine 26. Threonine 42 carries the phosphothreonine modification. Residues 54–67 (DRAAQSLLNKLIRS) form an N-terminal helix region. The Q motif signature appears at 91–119 (KSFEELRLKPQLLQGVYAMGFNRPSKIQE). Residues glutamine 118 and 137 to 144 (SQSGTGKT) contribute to the ATP site. Residues 124–294 (MMLAEPPQNL…QKVVPDPNVI (171 aa)) enclose the Helicase ATP-binding domain. A DEAD box motif is present at residues 241–244 (DEAD). The segment at 300–478 (EETLDTIKQY…DLDEIEKIAN (179 aa)) is C-terminal lobe. A Helicase C-terminal domain is found at 305 to 473 (TIKQYYVLCS…RLDTDDLDEI (169 aa)). Residues arginine 428 and arginine 431 each contribute to the ATP site.

This sequence belongs to the DEAD box helicase family. DDX19/DBP5 subfamily.

The protein localises to the cytoplasm. It localises to the nucleus. The protein resides in the nucleoplasm. The catalysed reaction is ATP + H2O = ADP + phosphate + H(+). Its function is as follows. ATP-dependent RNA helicase involved in mRNA export from the nucleus. Rather than unwinding RNA duplexes, DDX19 functions as a remodeler of ribonucleoprotein particles, whereby proteins bound to nuclear mRNA are dissociated and replaced by cytoplasmic mRNA binding proteins. In Homo sapiens (Human), this protein is ATP-dependent RNA helicase DDX19A (DDX19A).